The following is a 945-amino-acid chain: MSNKKADSKPQAKYPVNLLDTPFPMRGDLPKREPQWVEDWEARGVYEKIRAASQGRPKFILHDGPPYANGDIHLGHAVNKILKDMVVKSRNMAGFDAPYVPGWDCHGMPIEIQIEKQFGKSLPAAEVMAKARAYATEQIEKQKVGFKRLGVLGEWGNPYKTMNFQNEAEEIRALGKIIEKGYVYRGLKPVNWCFDCGSALAEAEVEYKDRTDPTIDVLFAFAEPEKTAHAFGLAELPRAEGGIVIWTTTPWTIPANQALNLHPEIVYALVDTERGLLVMAEERVEACMKDFGLTGRVIARTPGEKLANLRFHHPLAAAHPGYKRTSPVYLGDYVTTDTGTGVVHSSPAYGVEDFTSCKAHGMTDSDIINPVMGDGRYIESLPLFGGLTIWDANPKIVDALKAAGSLLRNERYAHSYMHCWRHKTPIIYRATSQWFAGMDTQPADGGKTLRETALDAVDATAFYPSWGKQRLHAMIANRPDWTLSRQRQWGVPMAFFVHKETGELHPRTLELLEEVAKRVERQGIEAWQTLDARELIGDDANLYEKNRDTLDVWFDSGTTHWHVLRGSHKDQLQFPADLYLEGSDQHRGWFHSSLLTASMLDGRAPYKGLLTHGFTVDGEGRKMSKSLGNGIDPHEVANRLGAEIIRLWIASTDYSGELAISEEILKRVTEGYRRIRNTLRFLLANLSDFDYAKDALPAGQWLEIDRYAVAFAAQLQAELLAHYEKYEFHPVVAKLQTFCSEDLGGFYLDVLKDRLYTSAPASPARRSAQTALYHVTQGLLRVLAPFLSFTAEEAWRVFQPQSDTIFTETYYAYPEIAGAEALIAKWTLLRDVRGDVTKALEEARTANRIGSSLQAQVEVRASGARYDALASLGDDLKFVLITSAATVVKVDAQGDESVDVAASTYPKCERCWHYREDVGAHADHPTLCGRCFSNLFENGETRSAA.

Residues proline 66 to histidine 76 carry the 'HIGH' region motif. Glutamate 581 is a binding site for L-isoleucyl-5'-AMP. Positions lysine 622–serine 626 match the 'KMSKS' region motif. An ATP-binding site is contributed by lysine 625. Zn(2+)-binding residues include cysteine 908, cysteine 911, cysteine 928, and cysteine 931.

Belongs to the class-I aminoacyl-tRNA synthetase family. IleS type 1 subfamily. In terms of assembly, monomer. Zn(2+) serves as cofactor.

The protein localises to the cytoplasm. It catalyses the reaction tRNA(Ile) + L-isoleucine + ATP = L-isoleucyl-tRNA(Ile) + AMP + diphosphate. Its function is as follows. Catalyzes the attachment of isoleucine to tRNA(Ile). As IleRS can inadvertently accommodate and process structurally similar amino acids such as valine, to avoid such errors it has two additional distinct tRNA(Ile)-dependent editing activities. One activity is designated as 'pretransfer' editing and involves the hydrolysis of activated Val-AMP. The other activity is designated 'posttransfer' editing and involves deacylation of mischarged Val-tRNA(Ile). The sequence is that of Isoleucine--tRNA ligase 1 from Burkholderia pseudomallei (strain K96243).